Reading from the N-terminus, the 743-residue chain is Phosphoribosylformylglycinamidine synthase subunit PurL (743 aa).

The active site involves His50. 2 residues coordinate ATP: Tyr53 and Lys92. Residue Glu94 coordinates Mg(2+). Substrate is bound by residues 95–98 (SHNH) and Arg117. His96 acts as the Proton acceptor in catalysis. Asp118 is a binding site for Mg(2+). Gln241 is a binding site for substrate. Mg(2+) is bound at residue Asp269. 313-315 (ESQ) serves as a coordination point for substrate. Positions 495 and 532 each coordinate ATP. Asn533 contacts Mg(2+). Substrate is bound at residue Ser535.

The protein belongs to the FGAMS family. Monomer. Part of the FGAM synthase complex composed of 1 PurL, 1 PurQ and 2 PurS subunits.

The protein localises to the cytoplasm. It carries out the reaction N(2)-formyl-N(1)-(5-phospho-beta-D-ribosyl)glycinamide + L-glutamine + ATP + H2O = 2-formamido-N(1)-(5-O-phospho-beta-D-ribosyl)acetamidine + L-glutamate + ADP + phosphate + H(+). The protein operates within purine metabolism; IMP biosynthesis via de novo pathway; 5-amino-1-(5-phospho-D-ribosyl)imidazole from N(2)-formyl-N(1)-(5-phospho-D-ribosyl)glycinamide: step 1/2. Its function is as follows. Part of the phosphoribosylformylglycinamidine synthase complex involved in the purines biosynthetic pathway. Catalyzes the ATP-dependent conversion of formylglycinamide ribonucleotide (FGAR) and glutamine to yield formylglycinamidine ribonucleotide (FGAM) and glutamate. The FGAM synthase complex is composed of three subunits. PurQ produces an ammonia molecule by converting glutamine to glutamate. PurL transfers the ammonia molecule to FGAR to form FGAM in an ATP-dependent manner. PurS interacts with PurQ and PurL and is thought to assist in the transfer of the ammonia molecule from PurQ to PurL. The sequence is that of Phosphoribosylformylglycinamidine synthase subunit PurL from Rhizobium etli (strain ATCC 51251 / DSM 11541 / JCM 21823 / NBRC 15573 / CFN 42).